The primary structure comprises 763 residues: Probable ubiquitin carboxyl-terminal hydrolase MINDY-4 (763 aa).

At serine 143 the chain carries Phosphoserine. A disordered region spans residues 154–368; it reads SSKRSSHKSR…SQPASLRKNQ (215 aa). Residues 180-202 show a composition bias toward basic and acidic residues; that stretch reads EKTDKLPMSEPSLDTKRMGEKVR. 2 positions are modified to phosphoserine: serine 220 and serine 224. The span at 252–261 shows a compositional bias: polar residues; it reads ELSTHTSTCP. Residues 267 to 278 show a composition bias toward low complexity; that stretch reads PASSTASTSRSP. Serine 296 carries the post-translational modification Phosphoserine. Residues 346–355 show a composition bias toward basic and acidic residues; the sequence is TQERPERAFE. Residues 357–368 show a composition bias toward polar residues; the sequence is QGSQPASLRKNQ. The active-site Nucleophile is cysteine 463. The active-site Proton acceptor is the histidine 683.

This sequence belongs to the MINDY deubiquitinase family. FAM188 subfamily.

The enzyme catalyses Thiol-dependent hydrolysis of ester, thioester, amide, peptide and isopeptide bonds formed by the C-terminal Gly of ubiquitin (a 76-residue protein attached to proteins as an intracellular targeting signal).. Its function is as follows. Probable hydrolase that can remove 'Lys-48'-linked conjugated ubiquitin from proteins. The polypeptide is Probable ubiquitin carboxyl-terminal hydrolase MINDY-4 (MINDY4) (Bos taurus (Bovine)).